We begin with the raw amino-acid sequence, 318 residues long: Carnitine monooxygenase reductase subunit (318 aa).

Residues 5–107 (YEMFPAVVTR…SEPKNLFPLA (103 aa)) enclose the FAD-binding FR-type domain. Residues 233–318 (FTVVLAKSNQ…AKGKKLVLDL (86 aa)) enclose the 2Fe-2S ferredoxin-type domain. [2Fe-2S] cluster-binding residues include C267, C272, C275, and C305.

The protein belongs to the PDR/VanB family. CntB subfamily. In terms of assembly, composed of an oxygenase subunit (cntA) and a reductase subunit (cntB). Requires FMN as cofactor. The cofactor is [2Fe-2S] cluster.

It carries out the reaction (R)-carnitine + NADH + O2 + H(+) = (3R)-3-hydroxy-4-oxobutanoate + trimethylamine + NAD(+) + H2O. It catalyses the reaction (R)-carnitine + NADPH + O2 + H(+) = (3R)-3-hydroxy-4-oxobutanoate + trimethylamine + NADP(+) + H2O. It participates in amine and polyamine metabolism; carnitine metabolism. Converts carnitine to trimethylamine and malic semialdehyde. The polypeptide is Carnitine monooxygenase reductase subunit (Acinetobacter baumannii (strain ATCC 19606 / DSM 30007 / JCM 6841 / CCUG 19606 / CIP 70.34 / NBRC 109757 / NCIMB 12457 / NCTC 12156 / 81)).